Reading from the N-terminus, the 80-residue chain is Small ribosomal subunit protein bS16 (80 aa).

Belongs to the bacterial ribosomal protein bS16 family.

In Laribacter hongkongensis (strain HLHK9), this protein is Small ribosomal subunit protein bS16.